Here is a 459-residue protein sequence, read N- to C-terminus: Fe(3+)-Zn(2+) purple acid phosphatase (459 aa).

The first 22 residues, M1 to G22, serve as a signal peptide directing secretion. The residue at position 23 (G23) is a Blocked amino end (Gly). A glycan (N-linked (GlcNAc...) asparagine; partial) is linked at N108. Residue N136 is glycosylated (N-linked (GlcNAc...) asparagine). Position 162 (D162) interacts with Fe cation. N170 carries N-linked (GlcNAc...) asparagine glycosylation. Fe cation contacts are provided by D191 and Y194. Zn(2+) is bound at residue D191. N228 is a binding site for Zn(2+). N238 carries N-linked (GlcNAc...) asparagine glycosylation. H313 lines the Zn(2+) pocket. H323 (proton donor) is an active-site residue. Residue H350 coordinates Zn(2+). H352 contacts Fe cation. Residue N423 is glycosylated (N-linked (GlcNAc...) asparagine).

The protein belongs to the metallophosphoesterase superfamily. Purple acid phosphatase family. As to quaternary structure, homodimer; disulfide-linked. Fe cation serves as cofactor. The cofactor is Zn(2+).

The protein resides in the secreted. It carries out the reaction a phosphate monoester + H2O = an alcohol + phosphate. Its activity is regulated as follows. Inhibited by compounds CC24201, CC27209, and MO07123. Inhibited by the tetraoxoanions molybdate and phosphate. Not inhibited by EDTA or tartrate. The sequence is that of Fe(3+)-Zn(2+) purple acid phosphatase from Phaseolus vulgaris (Kidney bean).